The chain runs to 240 residues: Cysteine-rich secretory protein (240 aa).

Positions Met-1–Gly-19 are cleaved as a signal peptide. Residues Val-38 to Tyr-166 enclose the SCP domain. Cystine bridges form between Cys-75–Cys-153, Cys-92–Cys-167, Cys-148–Cys-164, Cys-186–Cys-193, Cys-189–Cys-198, Cys-202–Cys-235, Cys-211–Cys-229, and Cys-220–Cys-233. A ShKT domain is found at Cys-202–Cys-235.

Belongs to the CRISP family. Expressed by the venom gland.

The protein localises to the secreted. In terms of biological role, weakly blocks contraction of smooth muscle elicited by high potassium-induced depolarization, but does not block caffeine-stimulated contraction. May target voltage-gated calcium channels on smooth muscle. This Crotalus adamanteus (Eastern diamondback rattlesnake) protein is Cysteine-rich secretory protein.